Here is a 246-residue protein sequence, read N- to C-terminus: 1-(5-phosphoribosyl)-5-[(5-phosphoribosylamino)methylideneamino] imidazole-4-carboxamide isomerase (246 aa).

Catalysis depends on Asp-8, which acts as the Proton acceptor. Asp-130 functions as the Proton donor in the catalytic mechanism.

Belongs to the HisA/HisF family.

It localises to the cytoplasm. The enzyme catalyses 1-(5-phospho-beta-D-ribosyl)-5-[(5-phospho-beta-D-ribosylamino)methylideneamino]imidazole-4-carboxamide = 5-[(5-phospho-1-deoxy-D-ribulos-1-ylimino)methylamino]-1-(5-phospho-beta-D-ribosyl)imidazole-4-carboxamide. It functions in the pathway amino-acid biosynthesis; L-histidine biosynthesis; L-histidine from 5-phospho-alpha-D-ribose 1-diphosphate: step 4/9. This Shigella sonnei (strain Ss046) protein is 1-(5-phosphoribosyl)-5-[(5-phosphoribosylamino)methylideneamino] imidazole-4-carboxamide isomerase.